A 120-amino-acid polypeptide reads, in one-letter code: MIQRESRLVVADNSGAKEVLVIGILGGTRRSHVNIGDIVVVTVKSGSGTVKKHDVLKAVIVRTKKGLRRKNGSYIKFDDNAVVLLKEDLNIIGTRIFGPVVRELSDKKFSKIVSLAQLVL.

Belongs to the universal ribosomal protein uL14 family. As to quaternary structure, part of the 50S ribosomal subunit. Forms a cluster with proteins L3 and L19. In the 70S ribosome, L14 and L19 interact and together make contacts with the 16S rRNA in bridges B5 and B8.

In terms of biological role, binds to 23S rRNA. Forms part of two intersubunit bridges in the 70S ribosome. This chain is Large ribosomal subunit protein uL14, found in Aster yellows witches'-broom phytoplasma (strain AYWB).